The chain runs to 123 residues: Ribosome-binding factor A (123 aa).

It belongs to the RbfA family. As to quaternary structure, monomer. Binds 30S ribosomal subunits, but not 50S ribosomal subunits or 70S ribosomes.

The protein resides in the cytoplasm. Functionally, one of several proteins that assist in the late maturation steps of the functional core of the 30S ribosomal subunit. Associates with free 30S ribosomal subunits (but not with 30S subunits that are part of 70S ribosomes or polysomes). Required for efficient processing of 16S rRNA. May interact with the 5'-terminal helix region of 16S rRNA. In Magnetococcus marinus (strain ATCC BAA-1437 / JCM 17883 / MC-1), this protein is Ribosome-binding factor A.